The sequence spans 51 residues: Astexin-1 (51 aa).

The propeptide occupies 1–28; it reads MHTPIISETVQPKTAGLIVLGKASAETR. Positions 29-37 form a cross-link, isoaspartyl glycine isopeptide (Gly-Asp); the sequence is GLSQGVEPD.

In terms of processing, this lasso peptide is probably hydrolyzed to a linear form by the isopeptidase AtxE1, in vivo.

In terms of biological role, shows weak antimicrobial activity against its phylogenetic relative Caulobacter crescentus. Does not show activity against other bacteria tested (E.coli, Vibrio sp, Burkhoderia thailandensis, and Salmonella newport). In Asticcacaulis excentricus (strain ATCC 15261 / DSM 4724 / KCTC 12464 / NCIMB 9791 / VKM B-1370 / CB 48), this protein is Astexin-1.